A 957-amino-acid polypeptide reads, in one-letter code: PE-PGRS family protein PE_PGRS3 (957 aa).

A PE domain is found at Val-4–Ala-94. Residues Cys-893–Ala-925 show a composition bias toward basic residues. The segment at Cys-893–Pro-957 is disordered.

This sequence belongs to the mycobacterial PE family. PGRS subfamily. Post-translationally, a cleavage of the protein removes the N-terminal 120-150 residues, immediately upstream the PGRS domain. The exact position of the cleavage site could not be identified.

The protein resides in the cell outer membrane. Its subcellular location is the secreted. It is found in the cell wall. The protein localises to the cell surface. The arginine-rich C-terminal region protrudes from the mycobacterial membrane and mediates M.tuberculosis entry into host epithelial cells. May serve as a bridge between mycobacteria and host cells by interacting with specific host phospholipids and extracting them from host cells, for their direct integration or as a source of phosphate, during phases of TB pathogenesis when M.tuberculosis is short of phosphate supply. This chain is PE-PGRS family protein PE_PGRS3, found in Mycobacterium tuberculosis (strain ATCC 25618 / H37Rv).